The chain runs to 215 residues: MRVILLGAPGAGKGTQAKFITEKFGIPQISTGDMLRAAVKAGTELGLKAKSVMDSGGLVSDDLIINLVKERISQADCVNGFLFDGFPRTIPQAEALVKAGVELDNVVEIAVDDEEIVQRIAGRRVHEASGRVYHTVYNPPKIAGKDDITGEDLVQRKDDTEETVRHRLSVYHSQTKPLVEFYQQLAATQGKPKYSHIPGVGSVEVITGKVLEALS.

Residue 10-15 (GAGKGT) coordinates ATP. The NMP stretch occupies residues 30 to 59 (STGDMLRAAVKAGTELGLKAKSVMDSGGLV). Residues threonine 31, arginine 36, 57 to 59 (GLV), 85 to 88 (GFPR), and glutamine 92 contribute to the AMP site. An LID region spans residues 122–159 (GRRVHEASGRVYHTVYNPPKIAGKDDITGEDLVQRKDD). ATP contacts are provided by residues arginine 123 and 132–133 (VY). Residues arginine 156 and arginine 167 each coordinate AMP. ATP is bound at residue glycine 201.

This sequence belongs to the adenylate kinase family. In terms of assembly, monomer.

It localises to the cytoplasm. The enzyme catalyses AMP + ATP = 2 ADP. It participates in purine metabolism; AMP biosynthesis via salvage pathway; AMP from ADP: step 1/1. Catalyzes the reversible transfer of the terminal phosphate group between ATP and AMP. Plays an important role in cellular energy homeostasis and in adenine nucleotide metabolism. This Pseudomonas fluorescens (strain ATCC BAA-477 / NRRL B-23932 / Pf-5) protein is Adenylate kinase.